The following is a 1287-amino-acid chain: Cell adhesion molecule-related/down-regulated by oncogenes (1287 aa).

The signal sequence occupies residues 1–25 (MHPDLGPLCTLLYVTLTILCSSVSS). The Extracellular portion of the chain corresponds to 26-963 (DLAPYFTSEP…PATSPARSSD (938 aa)). Ig-like C2-type domains lie at 29–114 (PYFT…ATVS), 120–204 (DFGS…LKVE), 225–303 (PTHS…KYVT), 310–396 (EHAS…GRLE), and 405–516 (PVII…ASLM). A disulfide bridge connects residues Cys50 and Cys97. Asn88, Asn100, Asn180, Asn287, Asn294, Asn342, and Asn427 each carry an N-linked (GlcNAc...) asparagine glycan. 2 disulfides stabilise this stretch: Cys141-Cys191 and Cys243-Cys290. 2 disulfide bridges follow: Cys333–Cys380 and Cys426–Cys500. The tract at residues 531 to 553 (LPDAAQNDDRSKRDGSETGLLSS) is disordered. Residues 537–546 (NDDRSKRDGS) show a composition bias toward basic and acidic residues. The N-linked (GlcNAc...) asparagine glycan is linked to Asn570. Fibronectin type-III domains lie at 579-677 (APII…SKEK), 723-821 (APDR…FPNR), and 826-926 (PITG…TKVK). N-linked (GlcNAc...) asparagine glycosylation occurs at Asn873. Residues 933–955 (EYPVKDLSTPPNSLGSGGNVGPA) form a disordered region. A helical transmembrane segment spans residues 964–984 (MLYLIVGCVLGVMVLILMVFI). Residues 985–1287 (AMCLWKNRQQ…TEVLQQPRET (303 aa)) lie on the Cytoplasmic side of the membrane. The segment at 1268 to 1287 (SPPGIPLDSPTEVLQQPRET) is disordered.

In terms of assembly, part of a complex that contains BOC, CDON, NEO1, cadherins and CTNNB1. Interacts with NTN3. Interacts with PTCH1. Interacts with GAS1. Interacts with DHH, IHH and SHH. Post-translationally, N-glycosylated.

Its subcellular location is the cell membrane. Functionally, component of a cell-surface receptor complex that mediates cell-cell interactions between muscle precursor cells. Promotes differentiation of myogenic cells. The chain is Cell adhesion molecule-related/down-regulated by oncogenes (CDON) from Homo sapiens (Human).